The following is a 151-amino-acid chain: Acidic phospholipase A2 1 (151 aa).

A signal peptide spans 1–27; that stretch reads MYPAHLLVLLAVCVSLLGAASIPARPL. 7 cysteine pairs are disulfide-bonded: C38–C104, C54–C151, C56–C72, C71–C132, C78–C125, C88–C118, and C111–C123. Residues Y55, G57, and G59 each contribute to the Ca(2+) site. H75 is an active-site residue. D76 lines the Ca(2+) pocket. D126 is a catalytic residue.

The protein belongs to the phospholipase A2 family. Group I subfamily. D49 sub-subfamily. Ca(2+) is required as a cofactor. In terms of tissue distribution, expressed by the venom gland.

It is found in the secreted. The catalysed reaction is a 1,2-diacyl-sn-glycero-3-phosphocholine + H2O = a 1-acyl-sn-glycero-3-phosphocholine + a fatty acid + H(+). Functionally, PLA2 catalyzes the calcium-dependent hydrolysis of the 2-acyl groups in 3-sn-phosphoglycerides. The protein is Acidic phospholipase A2 1 of Tropidechis carinatus (Australian rough-scaled snake).